A 267-amino-acid chain; its full sequence is 4-hydroxy-tetrahydrodipicolinate reductase (267 aa).

Residues 9-14 (GVSGRM) and Asp35 contribute to the NAD(+) site. Arg36 contributes to the NADP(+) binding site. Residues 98-100 (GTT) and 122-125 (APNM) each bind NAD(+). His155 (proton donor/acceptor) is an active-site residue. His156 is a (S)-2,3,4,5-tetrahydrodipicolinate binding site. Lys159 acts as the Proton donor in catalysis. Residue 165–166 (GT) coordinates (S)-2,3,4,5-tetrahydrodipicolinate.

It belongs to the DapB family.

The protein resides in the cytoplasm. The catalysed reaction is (S)-2,3,4,5-tetrahydrodipicolinate + NAD(+) + H2O = (2S,4S)-4-hydroxy-2,3,4,5-tetrahydrodipicolinate + NADH + H(+). It carries out the reaction (S)-2,3,4,5-tetrahydrodipicolinate + NADP(+) + H2O = (2S,4S)-4-hydroxy-2,3,4,5-tetrahydrodipicolinate + NADPH + H(+). Its pathway is amino-acid biosynthesis; L-lysine biosynthesis via DAP pathway; (S)-tetrahydrodipicolinate from L-aspartate: step 4/4. In terms of biological role, catalyzes the conversion of 4-hydroxy-tetrahydrodipicolinate (HTPA) to tetrahydrodipicolinate. The sequence is that of 4-hydroxy-tetrahydrodipicolinate reductase from Thiobacillus denitrificans (strain ATCC 25259 / T1).